Consider the following 159-residue polypeptide: Sulfur carrier protein DsrE2 (159 aa).

The next 2 helical transmembrane spans lie at 21–43 and 72–91; these read PFIL…TFYG and WFPV…TAMM.

It is found in the cell membrane. It participates in energy metabolism; sulfur metabolism. Sulfur carrier protein probably involved in sulfur trafficking for oxidative dissimilatory sulfur metabolism. May be a component of a cytoplasmic sulfur relay system delivering sulfur to DsrC. Binds sulfur in the presence of sulfide in vitro. The chain is Sulfur carrier protein DsrE2 from Allochromatium vinosum (strain ATCC 17899 / DSM 180 / NBRC 103801 / NCIMB 10441 / D) (Chromatium vinosum).